The sequence spans 264 residues: Thymidylate synthase 2 (264 aa).

Arginine 21 contacts dUMP. Histidine 51 contacts (6R)-5,10-methylene-5,6,7,8-tetrahydrofolate. Residue 126-127 participates in dUMP binding; that stretch reads RR. Cysteine 146 serves as the catalytic Nucleophile. DUMP contacts are provided by residues 166-169, asparagine 177, and 207-209; these read RSAD and HIY. Aspartate 169 contributes to the (6R)-5,10-methylene-5,6,7,8-tetrahydrofolate binding site. Serine 263 is a binding site for (6R)-5,10-methylene-5,6,7,8-tetrahydrofolate.

Belongs to the thymidylate synthase family. Bacterial-type ThyA subfamily. Homodimer.

Its subcellular location is the cytoplasm. It carries out the reaction dUMP + (6R)-5,10-methylene-5,6,7,8-tetrahydrofolate = 7,8-dihydrofolate + dTMP. Its pathway is pyrimidine metabolism; dTTP biosynthesis. Its function is as follows. Catalyzes the reductive methylation of 2'-deoxyuridine-5'-monophosphate (dUMP) to 2'-deoxythymidine-5'-monophosphate (dTMP) while utilizing 5,10-methylenetetrahydrofolate (mTHF) as the methyl donor and reductant in the reaction, yielding dihydrofolate (DHF) as a by-product. This enzymatic reaction provides an intracellular de novo source of dTMP, an essential precursor for DNA biosynthesis. This is Thymidylate synthase 2 from Bacillus spizizenii (strain ATCC 23059 / NRRL B-14472 / W23) (Bacillus subtilis subsp. spizizenii).